We begin with the raw amino-acid sequence, 689 residues long: Glycine--tRNA ligase beta subunit (689 aa).

It belongs to the class-II aminoacyl-tRNA synthetase family. As to quaternary structure, tetramer of two alpha and two beta subunits.

It is found in the cytoplasm. The enzyme catalyses tRNA(Gly) + glycine + ATP = glycyl-tRNA(Gly) + AMP + diphosphate. This is Glycine--tRNA ligase beta subunit from Actinobacillus pleuropneumoniae serotype 5b (strain L20).